A 271-amino-acid chain; its full sequence is Probable ribosome biogenesis GTPase A (271 aa).

The 155-residue stretch at 21–175 (HDQLKKLASS…LSDTPGVFFK (155 aa)) folds into the CP-type G domain. GTP contacts are provided by residues 127–132 (NVGKSS) and glycine 171.

The protein belongs to the TRAFAC class YlqF/YawG GTPase family. MTG1 subfamily.

Its subcellular location is the cytoplasm. Its function is as follows. Required for a late step of 50S ribosomal subunit assembly. Has GTPase activity. Binds to the 23S rRNA. The chain is Probable ribosome biogenesis GTPase A (rbgA) from Mycoplasma pneumoniae (strain ATCC 29342 / M129 / Subtype 1) (Mycoplasmoides pneumoniae).